A 536-amino-acid chain; its full sequence is Dual specificity calcium/calmodulin-dependent 3',5'-cyclic nucleotide phosphodiesterase 1B (536 aa).

Residues 1–20 (MELSPRSPPEMLEESDCPSP) are disordered. Phosphoserine occurs at positions 7 and 15. Calmodulin-binding regions lie at residues 27-47 (PSKKMWIKLRSLLRYMVKQLE) and 118-141 (EKPKFRSIVHAVQAGIFVERMFRR). Residues 146-503 (VGPTYSTAVL…QKWKERAASG (358 aa)) form the PDEase domain. H223 acts as the Proton donor in catalysis. Zn(2+) contacts are provided by H227, H263, D264, and D370. D264 provides a ligand contact to Mg(2+). Disordered stretches follow at residues 447–474 (LADEDSKSKNQPSFQWRQPSLDVEVGDP) and 494–536 (QKWK…GNLD). A compositionally biased stretch (polar residues) spans 455–464 (KNQPSFQWRQ). Residues S466 and S514 each carry the phosphoserine modification.

This sequence belongs to the cyclic nucleotide phosphodiesterase family. PDE1 subfamily. As to quaternary structure, homodimer. It depends on Zn(2+) as a cofactor. Requires Mg(2+) as cofactor.

It is found in the cytoplasm. The protein localises to the cytosol. It carries out the reaction a nucleoside 3',5'-cyclic phosphate + H2O = a nucleoside 5'-phosphate + H(+). It catalyses the reaction 3',5'-cyclic GMP + H2O = GMP + H(+). The catalysed reaction is 3',5'-cyclic AMP + H2O = AMP + H(+). Its activity is regulated as follows. Type I PDE are activated by the binding of calmodulin in the presence of Ca(2+). Its function is as follows. Cyclic nucleotide phosphodiesterase with a dual specificity for the second messengers cAMP and cGMP, which are key regulators of many important physiological processes. Has a preference for cGMP as a substrate. This is Dual specificity calcium/calmodulin-dependent 3',5'-cyclic nucleotide phosphodiesterase 1B from Homo sapiens (Human).